The primary structure comprises 175 residues: Large ribosomal subunit protein uL10 (175 aa).

The protein belongs to the universal ribosomal protein uL10 family. In terms of assembly, part of the ribosomal stalk of the 50S ribosomal subunit. The N-terminus interacts with L11 and the large rRNA to form the base of the stalk. The C-terminus forms an elongated spine to which L12 dimers bind in a sequential fashion forming a multimeric L10(L12)X complex.

Its function is as follows. Forms part of the ribosomal stalk, playing a central role in the interaction of the ribosome with GTP-bound translation factors. This is Large ribosomal subunit protein uL10 from Xylella fastidiosa (strain M23).